Consider the following 406-residue polypeptide: Peptidase T (406 aa).

A Zn(2+)-binding site is contributed by H82. The active site involves D84. A Zn(2+)-binding site is contributed by D142. E176 acts as the Proton acceptor in catalysis. Positions 177, 199, and 381 each coordinate Zn(2+).

Belongs to the peptidase M20B family. It depends on Zn(2+) as a cofactor.

The protein localises to the cytoplasm. It catalyses the reaction Release of the N-terminal residue from a tripeptide.. Functionally, cleaves the N-terminal amino acid of tripeptides. The chain is Peptidase T from Streptococcus agalactiae serotype V (strain ATCC BAA-611 / 2603 V/R).